We begin with the raw amino-acid sequence, 231 residues long: NADH-ubiquinone oxidoreductase chain 4 (231 aa).

6 consecutive transmembrane segments (helical) span residues 1-21 (PIAG…YGII), 34-54 (MFLP…LTCL), 62-84 (LIAY…QTPW), 89-111 (AMAL…NTTY), 128-148 (ILPM…AIPP), and 169-189 (TIIM…HMFL).

Belongs to the complex I subunit 4 family.

The protein resides in the mitochondrion membrane. The enzyme catalyses a ubiquinone + NADH + 5 H(+)(in) = a ubiquinol + NAD(+) + 4 H(+)(out). Functionally, core subunit of the mitochondrial membrane respiratory chain NADH dehydrogenase (Complex I) that is believed to belong to the minimal assembly required for catalysis. Complex I functions in the transfer of electrons from NADH to the respiratory chain. The immediate electron acceptor for the enzyme is believed to be ubiquinone. In Bothrops erythromelas (Caatinga lance head), this protein is NADH-ubiquinone oxidoreductase chain 4 (MT-ND4).